A 353-amino-acid chain; its full sequence is UPF0421 protein YgaE (353 aa).

The next 4 helical transmembrane spans lie at 20 to 40 (LASW…IFAI), 67 to 87 (VFGL…VIVI), 103 to 123 (LVTV…FALI), and 125 to 145 (TSTV…FLPP).

This sequence belongs to the UPF0421 family.

The protein resides in the cell membrane. The chain is UPF0421 protein YgaE (ygaE) from Bacillus subtilis (strain 168).